Consider the following 752-residue polypeptide: Ribosomal RNA large subunit methyltransferase K/L (752 aa).

The 112-residue stretch at 53–164 (QMYKICLWTR…RDELHISIDL (112 aa)) folds into the THUMP domain.

The protein belongs to the methyltransferase superfamily. RlmKL family.

Its subcellular location is the cytoplasm. It catalyses the reaction guanosine(2445) in 23S rRNA + S-adenosyl-L-methionine = N(2)-methylguanosine(2445) in 23S rRNA + S-adenosyl-L-homocysteine + H(+). The enzyme catalyses guanosine(2069) in 23S rRNA + S-adenosyl-L-methionine = N(2)-methylguanosine(2069) in 23S rRNA + S-adenosyl-L-homocysteine + H(+). Its function is as follows. Specifically methylates the guanine in position 2445 (m2G2445) and the guanine in position 2069 (m7G2069) of 23S rRNA. The polypeptide is Ribosomal RNA large subunit methyltransferase K/L (Saccharophagus degradans (strain 2-40 / ATCC 43961 / DSM 17024)).